Consider the following 83-residue polypeptide: Conotoxin MiEr92 (83 aa).

The signal sequence occupies residues 1–22 (MKLTCVLIVIMLFLTVCPLITA). Positions 23–49 (DHSRDKQEHPAMRLKDRIRYLRRGKLT) are excised as a propeptide. 3 disulfides stabilise this stretch: Cys-52/Cys-67, Cys-59/Cys-72, and Cys-66/Cys-81.

It belongs to the conotoxin O1 superfamily. In terms of tissue distribution, expressed by the venom duct.

It localises to the secreted. The protein is Conotoxin MiEr92 of Conus miles (Soldier cone).